A 271-amino-acid polypeptide reads, in one-letter code: MATH domain and coiled-coil domain-containing protein At3g27040 (271 aa).

Residues 7–133 (DKKFTWVIKN…NGEVKIVAEV (127 aa)) enclose the MATH domain. Residues 230 to 271 (KLDWLEKKLKETGKSRLQEIEEDLKDLKVKCADMDALLDFLR) adopt a coiled-coil conformation.

This Arabidopsis thaliana (Mouse-ear cress) protein is MATH domain and coiled-coil domain-containing protein At3g27040.